The sequence spans 190 residues: UPF0340 protein BT9727_4999 (190 aa).

The protein belongs to the UPF0340 family.

This is UPF0340 protein BT9727_4999 from Bacillus thuringiensis subsp. konkukian (strain 97-27).